Consider the following 148-residue polypeptide: uncharacterized protein (148 aa).

A signal peptide spans 1–35 (MRCVTRTRNWWRRAARMPRAGSSAWWVAVCKQVCT).

The protein resides in the secreted. This is an uncharacterized protein from Homo sapiens (Human).